The primary structure comprises 89 residues: DNA-directed RNA polymerase subunit Rpo6 (89 aa).

It belongs to the archaeal Rpo6/eukaryotic RPB6 RNA polymerase subunit family. As to quaternary structure, part of the 13-subunit RNA polymerase complex.

It is found in the cytoplasm. It carries out the reaction RNA(n) + a ribonucleoside 5'-triphosphate = RNA(n+1) + diphosphate. In terms of biological role, DNA-dependent RNA polymerase (RNAP) catalyzes the transcription of DNA into RNA using the four ribonucleoside triphosphates as substrates. Reconstitution experiments show this subunit is required for basic activity. The protein is DNA-directed RNA polymerase subunit Rpo6 of Sulfolobus acidocaldarius (strain ATCC 33909 / DSM 639 / JCM 8929 / NBRC 15157 / NCIMB 11770).